Here is a 299-residue protein sequence, read N- to C-terminus: MKPDAHQVKQFLLNLQDTICQQLTAVDGAEFVEDSWQREAGGGGRSRVLRNDGVFEQAGVNFSHVHGEAMPASATAHRPELAGRSFEAMGVSLVVHPHNPYVPTSHANVRFFIAEKPGAEPVWWFGGGFDLTPFYGFEEDAIHWHRTARDLCLPFGEDVYPRYKKWCDDYFYLKHRNEQRGIGGLFFDDLNTPDFDHCFAFMQAVGKGYTDAYLPIVERRKAMAYGERERNFQLYRRGRYVEFNLVWDRGTLFGLQTGGRTESILMSMPPLVRWEYDYQPKDGSPEAALSEFIKVRDWV.

Substrate is bound at residue S92. Residues H96 and H106 each coordinate a divalent metal cation. H106 serves as the catalytic Proton donor. 108 to 110 (NVR) contacts substrate. The a divalent metal cation site is built by H145 and H175. Positions 240 to 275 (YVEFNLVWDRGTLFGLQTGGRTESILMSMPPLVRWE) are important for dimerization. 258 to 260 (GGR) contributes to the substrate binding site.

The protein belongs to the aerobic coproporphyrinogen-III oxidase family. Homodimer. The cofactor is a divalent metal cation.

It localises to the cytoplasm. The enzyme catalyses coproporphyrinogen III + O2 + 2 H(+) = protoporphyrinogen IX + 2 CO2 + 2 H2O. The protein operates within porphyrin-containing compound metabolism; protoporphyrin-IX biosynthesis; protoporphyrinogen-IX from coproporphyrinogen-III (O2 route): step 1/1. Functionally, involved in the heme biosynthesis. Catalyzes the aerobic oxidative decarboxylation of propionate groups of rings A and B of coproporphyrinogen-III to yield the vinyl groups in protoporphyrinogen-IX. The protein is Oxygen-dependent coproporphyrinogen-III oxidase of Shigella boydii serotype 18 (strain CDC 3083-94 / BS512).